Reading from the N-terminus, the 234-residue chain is tRNA1(Val) (adenine(37)-N6)-methyltransferase (234 aa).

Belongs to the methyltransferase superfamily. tRNA (adenine-N(6)-)-methyltransferase family.

It localises to the cytoplasm. It catalyses the reaction adenosine(37) in tRNA1(Val) + S-adenosyl-L-methionine = N(6)-methyladenosine(37) in tRNA1(Val) + S-adenosyl-L-homocysteine + H(+). In terms of biological role, specifically methylates the adenine in position 37 of tRNA(1)(Val) (anticodon cmo5UAC). The polypeptide is tRNA1(Val) (adenine(37)-N6)-methyltransferase (Flavobacterium psychrophilum (strain ATCC 49511 / DSM 21280 / CIP 103535 / JIP02/86)).